We begin with the raw amino-acid sequence, 161 residues long: Large ribosomal subunit protein uL11 (161 aa).

The protein belongs to the universal ribosomal protein uL11 family. In terms of assembly, part of the ribosomal stalk of the 50S ribosomal subunit. Interacts with L10 and the large rRNA to form the base of the stalk. L10 forms an elongated spine to which L12 dimers bind in a sequential fashion forming a multimeric L10(L12)X complex.

Forms part of the ribosomal stalk which helps the ribosome interact with GTP-bound translation factors. The polypeptide is Large ribosomal subunit protein uL11 (Methanosarcina mazei (strain ATCC BAA-159 / DSM 3647 / Goe1 / Go1 / JCM 11833 / OCM 88) (Methanosarcina frisia)).